A 120-amino-acid polypeptide reads, in one-letter code: Small ribosomal subunit protein eS17 (120 aa).

It belongs to the eukaryotic ribosomal protein eS17 family. As to quaternary structure, component of the small ribosomal subunit.

It localises to the cytoplasm. The chain is Small ribosomal subunit protein eS17 (RPS17) from Encephalitozoon cuniculi (strain GB-M1) (Microsporidian parasite).